Consider the following 416-residue polypeptide: Gamma-glutamyl phosphate reductase (416 aa).

It belongs to the gamma-glutamyl phosphate reductase family.

The protein localises to the cytoplasm. It carries out the reaction L-glutamate 5-semialdehyde + phosphate + NADP(+) = L-glutamyl 5-phosphate + NADPH + H(+). It participates in amino-acid biosynthesis; L-proline biosynthesis; L-glutamate 5-semialdehyde from L-glutamate: step 2/2. In terms of biological role, catalyzes the NADPH-dependent reduction of L-glutamate 5-phosphate into L-glutamate 5-semialdehyde and phosphate. The product spontaneously undergoes cyclization to form 1-pyrroline-5-carboxylate. The protein is Gamma-glutamyl phosphate reductase of Salmonella agona (strain SL483).